A 554-amino-acid polypeptide reads, in one-letter code: CTP synthase (554 aa).

Residues 1 to 265 (MTPLIFVTGG…DEIVVNQLKL (265 aa)) form an amidoligase domain region. Position 13 (Ser-13) interacts with CTP. Residue Ser-13 coordinates UTP. Residue 14-19 (SLGKGI) coordinates ATP. The Mg(2+) site is built by Asp-71 and Glu-139. CTP-binding positions include 146 to 148 (DIE), 186 to 191 (KTKPTQ), and Lys-222. UTP contacts are provided by residues 186 to 191 (KTKPTQ) and Lys-222. The region spanning 292 to 545 (TIAVVGKYVD…IRAARERKAG (254 aa)) is the Glutamine amidotransferase type-1 domain. Gly-353 serves as a coordination point for L-glutamine. The Nucleophile; for glutamine hydrolysis role is filled by Cys-380. Residues 381–384 (YGMQ), Glu-404, and Arg-471 contribute to the L-glutamine site. Residues His-518 and Glu-520 contribute to the active site.

This sequence belongs to the CTP synthase family. Homotetramer.

It catalyses the reaction UTP + L-glutamine + ATP + H2O = CTP + L-glutamate + ADP + phosphate + 2 H(+). The catalysed reaction is L-glutamine + H2O = L-glutamate + NH4(+). The enzyme catalyses UTP + NH4(+) + ATP = CTP + ADP + phosphate + 2 H(+). Its pathway is pyrimidine metabolism; CTP biosynthesis via de novo pathway; CTP from UDP: step 2/2. Allosterically activated by GTP, when glutamine is the substrate; GTP has no effect on the reaction when ammonia is the substrate. The allosteric effector GTP functions by stabilizing the protein conformation that binds the tetrahedral intermediate(s) formed during glutamine hydrolysis. Inhibited by the product CTP, via allosteric rather than competitive inhibition. Functionally, catalyzes the ATP-dependent amination of UTP to CTP with either L-glutamine or ammonia as the source of nitrogen. Regulates intracellular CTP levels through interactions with the four ribonucleotide triphosphates. The polypeptide is CTP synthase (Stenotrophomonas maltophilia (strain K279a)).